The primary structure comprises 338 residues: D-erythrose-4-phosphate dehydrogenase (338 aa).

11–12 (RI) is a binding site for NAD(+). Residues 153–155 (SCT), Arg199, 212–213 (TK), and Arg235 contribute to the substrate site. Cys154 acts as the Nucleophile in catalysis. Residue Asn317 participates in NAD(+) binding.

Belongs to the glyceraldehyde-3-phosphate dehydrogenase family. Epd subfamily. In terms of assembly, homotetramer.

The protein localises to the cytoplasm. The enzyme catalyses D-erythrose 4-phosphate + NAD(+) + H2O = 4-phospho-D-erythronate + NADH + 2 H(+). It participates in cofactor biosynthesis; pyridoxine 5'-phosphate biosynthesis; pyridoxine 5'-phosphate from D-erythrose 4-phosphate: step 1/5. In terms of biological role, catalyzes the NAD-dependent conversion of D-erythrose 4-phosphate to 4-phosphoerythronate. The protein is D-erythrose-4-phosphate dehydrogenase of Shewanella amazonensis (strain ATCC BAA-1098 / SB2B).